The sequence spans 216 residues: MARIIDLVPWEDGSTHVYASPAILLPIPRRRNQLAGVKQQLYHPALPSLRRMDMDSVKACLSDEHCQSTTYCRKDDFDNAYFTLLGVPNKPLQCLDITETGQRLRNRYHEGKLAPIAPGINRVDWPCFTRAIEDWSRFVSSAGEFKLPCASKKVESFSGYAVRYLKPEVTQSWRFCLNQNPSLDRYGQKPLPFDSLNAFRRFGSNYSRVNYLTPWH.

As to quaternary structure, microtubule inner protein component of sperm flagellar doublet microtubules. Expressed in sperm.

The protein localises to the cytoplasm. It is found in the cytoskeleton. It localises to the flagellum axoneme. Its function is as follows. Microtubule inner protein (MIP) part of the dynein-decorated doublet microtubules (DMTs) in flagellum axoneme. May serve to reinforce and thus stabilize the microtubule structure in the sperm flagella. The protein is Sperm microtubule inner protein 8 (SPMIP8) of Bos taurus (Bovine).